A 291-amino-acid polypeptide reads, in one-letter code: UTP--glucose-1-phosphate uridylyltransferase (291 aa).

This sequence belongs to the UDPGP type 2 family.

The enzyme catalyses alpha-D-glucose 1-phosphate + UTP + H(+) = UDP-alpha-D-glucose + diphosphate. In terms of biological role, may play a role in stationary phase survival. This chain is UTP--glucose-1-phosphate uridylyltransferase (galU), found in Mycoplasma pneumoniae (strain ATCC 29342 / M129 / Subtype 1) (Mycoplasmoides pneumoniae).